The primary structure comprises 438 residues: sn-glycerol-3-phosphate-binding periplasmic protein UgpB (438 aa).

Residues 1 to 23 form the signal peptide; that stretch reads MKPLRYTASALALGLALMANAQA. Sn-glycerol 3-phosphate contacts are provided by Tyr65, Glu89, Ser144, Ser270, Gly307, Tyr346, and Arg397.

It belongs to the bacterial solute-binding protein 1 family. In terms of assembly, the complex is composed of two ATP-binding proteins (UgpC), two transmembrane proteins (UgpA and UgpE) and a solute-binding protein (UgpB).

It is found in the periplasm. Part of the ABC transporter complex UgpBAEC involved in sn-glycerol-3-phosphate (G3P) import. Binds G3P. This Escherichia coli O1:K1 / APEC protein is sn-glycerol-3-phosphate-binding periplasmic protein UgpB (ugpB).